A 293-amino-acid polypeptide reads, in one-letter code: Undecaprenyl-diphosphatase (293 aa).

7 consecutive transmembrane segments (helical) span residues Ile3–Pro23, Lys43–Phe63, Leu85–Ile105, Leu109–Ala129, Val203–Glu223, Ile238–Leu258, and Phe269–Ile289.

It belongs to the UppP family.

Its subcellular location is the cell inner membrane. It carries out the reaction di-trans,octa-cis-undecaprenyl diphosphate + H2O = di-trans,octa-cis-undecaprenyl phosphate + phosphate + H(+). In terms of biological role, catalyzes the dephosphorylation of undecaprenyl diphosphate (UPP). Confers resistance to bacitracin. This Ralstonia nicotianae (strain ATCC BAA-1114 / GMI1000) (Ralstonia solanacearum) protein is Undecaprenyl-diphosphatase.